The sequence spans 106 residues: uncharacterized protein (106 aa).

Residues 1–93 form the HTH hxlR-type domain; the sequence is MSIFYVLGKK…WEAKWKEAKI (93 aa).

This is an uncharacterized protein from Methanocaldococcus jannaschii (strain ATCC 43067 / DSM 2661 / JAL-1 / JCM 10045 / NBRC 100440) (Methanococcus jannaschii).